The following is an 88-amino-acid chain: Enticin (88 aa).

An N-terminal signal peptide occupies residues 1–19; sequence MKTALPLLLLTCLVAAVQS. Disulfide bonds link C25–C33, C40–C52, and C59–C67. The propeptide occupies 69-88; the sequence is REQSQLNHDHLNNHTTTQQP.

In terms of assembly, binds to attractin and temptin.

The protein localises to the secreted. Functionally, a component of the complex of water-borne protein pheromones that stimulates attraction and mating behavior. The protein is Enticin of Aplysia californica (California sea hare).